The chain runs to 131 residues: Large ribosomal subunit protein eL32 (131 aa).

Belongs to the eukaryotic ribosomal protein eL32 family.

The protein is Large ribosomal subunit protein eL32 (RPL32) of Candida glabrata (strain ATCC 2001 / BCRC 20586 / JCM 3761 / NBRC 0622 / NRRL Y-65 / CBS 138) (Yeast).